A 171-amino-acid chain; its full sequence is Photosystem I assembly protein Ycf3 (171 aa).

3 TPR repeats span residues 33–66, 70–103, and 118–151; these read AFSYYRYGMSAQSSGDYAEALENYYEALKLEEDP, SYILYNIGLIYGNNGDYSKSLDYYHQALDLNSRL, and GTKSSEKKEFEVAQNNFDKAASYWKKAIRLAPNN.

This sequence belongs to the Ycf3 family.

Its subcellular location is the plastid. The protein localises to the chloroplast thylakoid membrane. Its function is as follows. Essential for the assembly of the photosystem I (PSI) complex. May act as a chaperone-like factor to guide the assembly of the PSI subunits. This chain is Photosystem I assembly protein Ycf3, found in Emiliania huxleyi (Coccolithophore).